Consider the following 717-residue polypeptide: DNA ligase (717 aa).

NAD(+) is bound by residues 44–48, 93–94, and glutamate 127; these read DADYD and SL. The active-site N6-AMP-lysine intermediate is the lysine 129. Residues arginine 150, glutamate 186, lysine 302, and lysine 326 each contribute to the NAD(+) site. The Zn(2+) site is built by cysteine 431, cysteine 434, cysteine 455, and cysteine 461. A BRCT domain is found at 639-717; it reads ATDSPVAGKT…EDEWLALIGG (79 aa).

Belongs to the NAD-dependent DNA ligase family. LigA subfamily. It depends on Mg(2+) as a cofactor. Mn(2+) is required as a cofactor.

The catalysed reaction is NAD(+) + (deoxyribonucleotide)n-3'-hydroxyl + 5'-phospho-(deoxyribonucleotide)m = (deoxyribonucleotide)n+m + AMP + beta-nicotinamide D-nucleotide.. Functionally, DNA ligase that catalyzes the formation of phosphodiester linkages between 5'-phosphoryl and 3'-hydroxyl groups in double-stranded DNA using NAD as a coenzyme and as the energy source for the reaction. It is essential for DNA replication and repair of damaged DNA. In Sinorhizobium medicae (strain WSM419) (Ensifer medicae), this protein is DNA ligase.